The sequence spans 257 residues: tRNA-cytidine(32) 2-sulfurtransferase (257 aa).

A PP-loop motif motif is present at residues 37 to 42; that stretch reads SGGKDS. The [4Fe-4S] cluster site is built by Cys-112, Cys-115, and Cys-202.

Belongs to the TtcA family. Homodimer. Mg(2+) serves as cofactor. [4Fe-4S] cluster is required as a cofactor.

The protein localises to the cytoplasm. It catalyses the reaction cytidine(32) in tRNA + S-sulfanyl-L-cysteinyl-[cysteine desulfurase] + AH2 + ATP = 2-thiocytidine(32) in tRNA + L-cysteinyl-[cysteine desulfurase] + A + AMP + diphosphate + H(+). The protein operates within tRNA modification. In terms of biological role, catalyzes the ATP-dependent 2-thiolation of cytidine in position 32 of tRNA, to form 2-thiocytidine (s(2)C32). The sulfur atoms are provided by the cysteine/cysteine desulfurase (IscS) system. This is tRNA-cytidine(32) 2-sulfurtransferase from Geobacter sulfurreducens (strain ATCC 51573 / DSM 12127 / PCA).